A 786-amino-acid polypeptide reads, in one-letter code: Calcium-independent phospholipase A2-gamma (786 aa).

N-linked (GlcNAc...) asparagine glycosylation occurs at N4. 3 disordered regions span residues 158 to 180 (KKYSDKSTEKSPVPEGRNHIIDK), 225 to 285 (KENS…SLPI), and 321 to 348 (SKSQAEEQEEPAKSEPAGSKDKTVEEKK). Over residues 225 to 245 (KENSHFQEKSELEGKKVEEGK) the composition is skewed to basic and acidic residues. Composition is skewed to polar residues over residues 246–258 (SSSLDPGILTSQA) and 266–285 (SAGTMDKATSPSGTPESLPI). In terms of domain architecture, PNPLA spans 449 to 644 (LTIDGGGTRG…LLNNPSALAM (196 aa)). The short motif at 453–458 (GGGTRG) is the GXGXXG element. The chain crosses the membrane as a helical span at residues 483–503 (ICGVSTGAILAFMLGLFHLPL). A GXSXG motif is present at residues 485–489 (GVSTG). S487 (nucleophile) is an active-site residue. Catalysis depends on D631, which acts as the Proton acceptor. A DGA/G motif is present at residues 631–633 (DGG). N6-succinyllysine is present on K740.

As to expression, expressed in kidney, heart and brain.

It is found in the endoplasmic reticulum membrane. The protein resides in the mitochondrion membrane. Its subcellular location is the peroxisome membrane. It carries out the reaction a 1,2-diacyl-sn-glycero-3-phosphocholine + H2O = a 1-acyl-sn-glycero-3-phosphocholine + a fatty acid + H(+). It catalyses the reaction a 1,2-diacyl-sn-glycero-3-phosphocholine + H2O = a 2-acyl-sn-glycero-3-phosphocholine + a fatty acid + H(+). The enzyme catalyses a 1,2-diacyl-sn-glycero-3-phosphoethanolamine + H2O = a 1-acyl-sn-glycero-3-phosphoethanolamine + a fatty acid + H(+). The catalysed reaction is a 1-O-(1Z-alkenyl)-2-acyl-sn-glycero-3-phosphocholine + H2O = a 1-O-(1Z-alkenyl)-sn-glycero-3-phosphocholine + a fatty acid + H(+). It carries out the reaction a 1-acyl-sn-glycero-3-phosphocholine + H2O = sn-glycerol 3-phosphocholine + a fatty acid + H(+). It catalyses the reaction 1-acyl-2-(9Z,12Z)-octadecadienoyl-sn-glycero-3-phosphocholine + H2O = a 1-acyl-sn-glycero-3-phosphocholine + (9Z,12Z)-octadecadienoate + H(+). The enzyme catalyses 1-acyl-2-(5Z,8Z,11Z,14Z-eicosatetraenoyl)-sn-glycero-3-phosphocholine + H2O = a 1-acyl-sn-glycero-3-phosphocholine + (5Z,8Z,11Z,14Z)-eicosatetraenoate + H(+). The catalysed reaction is 1-hexadecanoyl-2-(5Z,8Z,11Z,14Z-eicosatetraenoyl)-sn-glycero-3-phosphocholine + H2O = 1-hexadecanoyl-sn-glycero-3-phosphocholine + (5Z,8Z,11Z,14Z)-eicosatetraenoate + H(+). It carries out the reaction 1-octadecanoyl-2-(9Z-octadecenoyl)-sn-glycero-3-phosphocholine + H2O = 1-octadecanoyl-sn-glycero-3-phosphocholine + (9Z)-octadecenoate + H(+). It catalyses the reaction 1-hexadecanoyl-2-(9Z-octadecenoyl)-sn-glycero-3-phosphocholine + H2O = 1-hexadecanoyl-sn-glycero-3-phosphocholine + (9Z)-octadecenoate + H(+). The enzyme catalyses 1-hexadecanoyl-2-(9Z,12Z-octadecadienoyl)-sn-glycero-3-phosphocholine + H2O = (9Z,12Z)-octadecadienoate + 1-hexadecanoyl-sn-glycero-3-phosphocholine + H(+). The catalysed reaction is 1-acyl-2-(9Z,12Z)-octadecadienoyl-sn-glycero-3-phosphoethanolamine + H2O = a 1-acyl-sn-glycero-3-phosphoethanolamine + (9Z,12Z)-octadecadienoate + H(+). It carries out the reaction 1-acyl-2-(5Z,8Z,11Z,14Z)-eicosatetraenoyl-sn-glycero-3-phosphoethanolamine + H2O = a 1-acyl-sn-glycero-3-phosphoethanolamine + (5Z,8Z,11Z,14Z)-eicosatetraenoate + H(+). It catalyses the reaction 1-hexadecanoyl-2-(5Z,8Z,11Z,14Z-eicosatetraenoyl)-sn-glycero-3-phosphoethanolamine + H2O = 1-hexadecanoyl-sn-glycero-3-phosphoethanolamine + (5Z,8Z,11Z,14Z)-eicosatetraenoate + H(+). The enzyme catalyses 1-hexadecanoyl-2-(5Z,8Z,11Z,14Z-eicosatetraenoyl)-sn-glycero-3-phosphocholine + H2O = 2-(5Z,8Z,11Z,14Z)-eicosatetraenoyl-sn-glycero-3-phosphocholine + hexadecanoate + H(+). The catalysed reaction is 1-octadecanoyl-2-(9Z-octadecenoyl)-sn-glycero-3-phosphocholine + H2O = 2-(9Z-octadecenoyl)-sn-glycero-3-phosphocholine + octadecanoate + H(+). It carries out the reaction 1-hexadecanoyl-2-(4Z,7Z,10Z,13Z,16Z,19Z-docosahexaenoyl)-sn-glycero-3-phosphocholine + H2O = 2-(4Z,7Z,10Z,13Z,16Z,19Z-docosahexaenoyl)-sn-glycero-3-phosphocholine + hexadecanoate + H(+). It catalyses the reaction 1-O-(1Z)-hexadecenyl-2 (5Z,8Z,11Z,14Z)-eicosatetraenoyl-sn-glycero-3-phosphocholine + H2O = 1-(1Z-hexadecenyl)-sn-glycero-3-phosphocholine + (5Z,8Z,11Z,14Z)-eicosatetraenoate + H(+). The enzyme catalyses 1-O-(1Z-hexadecenyl)-2-(9Z-octadecenoyl)-sn-glycero-3-phosphocholine + H2O = 1-(1Z-hexadecenyl)-sn-glycero-3-phosphocholine + (9Z)-octadecenoate + H(+). The catalysed reaction is 1-hexadecanoyl-sn-glycero-3-phosphocholine + H2O = sn-glycerol 3-phosphocholine + hexadecanoate + H(+). It carries out the reaction 1',3'-bis-[1,2-di-(9Z,12Z-octadecadienoyl)-sn-glycero-3-phospho]-glycerol + H2O = 1'-[1,2-di-(9Z,12Z-octadecadienoyl)-sn-glycero-3-phospho]-3'-[1-(9Z,12Z-octadecadienoyl)-sn-glycero-3-phospho]-glycerol + (9Z,12Z)-octadecadienoate + H(+). It catalyses the reaction 1'-[1-acyl-2-(9-hydroxy-(10E,12Z)-octadecadienoyl)-sn-glycero-3-phospho]-3'-[1,2-diacyl-sn-glycero-3-phospho]-glycerol + H2O = 9-hydroxy-(10E,12Z)-octadecadienoate + 1'-[1,2-diacyl-sn-glycero-3-phospho],3'-[1-acyl-sn-glycero-3-phospho]-glycerol + H(+). It participates in phospholipid metabolism. With respect to regulation, calcium-independent phospholipase. Calcium-independent and membrane-bound phospholipase, that catalyzes the esterolytic cleavage of fatty acids from glycerophospholipids to yield free fatty acids and lysophospholipids, hence regulating membrane physical properties and the release of lipid second messengers and growth factors. Hydrolyzes phosphatidylethanolamine, phosphatidylcholine and probably phosphatidylinositol with a possible preference for the former. Has also a broad substrate specificity in terms of fatty acid moieties, hydrolyzing saturated and mono-unsaturated fatty acids at nearly equal rates from either the sn-1 or sn-2 position in diacyl phosphatidylcholine. However, has a weak activity toward polyunsaturated fatty acids at the sn-2 position, and thereby favors the production of 2-arachidonoyl lysophosphatidylcholine, a key branch point metabolite in eicosanoid signaling. On the other hand, can produce arachidonic acid from the sn-1 position of diacyl phospholipid and from the sn-2 position of arachidonate-containing plasmalogen substrates. Therefore, plays an important role in the mobilization of arachidonic acid in response to cellular stimuli and the generation of lipid second messengers. Can also hydrolyze lysophosphatidylcholine. In the mitochondrial compartment, catalyzes the hydrolysis and release of oxidized aliphatic chains from cardiolipin and integrates mitochondrial bioenergetics and signaling. It is essential for maintaining efficient bioenergetic mitochondrial function through tailoring mitochondrial membrane lipid metabolism and composition. The protein is Calcium-independent phospholipase A2-gamma of Oryctolagus cuniculus (Rabbit).